The following is a 257-amino-acid chain: NAD-capped RNA hydrolase NudC (257 aa).

Substrate is bound by residues Lys-25 and Arg-69. The Zn(2+) site is built by Cys-98 and Cys-101. Residue Glu-111 coordinates substrate. Zn(2+) is bound by residues Cys-116 and Cys-119. Tyr-124 is a binding site for substrate. A Nudix hydrolase domain is found at 125–248; the sequence is PQIAPCIIVA…TVARRLIEDT (124 aa). A divalent metal cation-binding residues include Ala-158, Glu-174, and Glu-178. The Nudix box motif lies at 159 to 180; it reads GFVEVGETLEQAVAREVMEESG. 192-199 provides a ligand contact to substrate; it reads QPWPFPQS. A divalent metal cation is bound at residue Glu-219. Ala-241 is a binding site for substrate.

The protein belongs to the Nudix hydrolase family. NudC subfamily. In terms of assembly, homodimer. Mg(2+) is required as a cofactor. The cofactor is Mn(2+). It depends on Zn(2+) as a cofactor.

It carries out the reaction a 5'-end NAD(+)-phospho-ribonucleoside in mRNA + H2O = a 5'-end phospho-adenosine-phospho-ribonucleoside in mRNA + beta-nicotinamide D-ribonucleotide + 2 H(+). The enzyme catalyses NAD(+) + H2O = beta-nicotinamide D-ribonucleotide + AMP + 2 H(+). It catalyses the reaction NADH + H2O = reduced beta-nicotinamide D-ribonucleotide + AMP + 2 H(+). Its function is as follows. mRNA decapping enzyme that specifically removes the nicotinamide adenine dinucleotide (NAD) cap from a subset of mRNAs by hydrolyzing the diphosphate linkage to produce nicotinamide mononucleotide (NMN) and 5' monophosphate mRNA. The NAD-cap is present at the 5'-end of some mRNAs and stabilizes RNA against 5'-processing. Has preference for mRNAs with a 5'-end purine. Catalyzes the hydrolysis of a broad range of dinucleotide pyrophosphates. This Shigella flexneri protein is NAD-capped RNA hydrolase NudC.